A 66-amino-acid chain; its full sequence is Large ribosomal subunit protein bL35 (66 aa).

The segment covering 1–16 (MPKMKTHRGAAKRVKR) has biased composition (basic residues). The tract at residues 1–28 (MPKMKTHRGAAKRVKRTGSGQLKRSRAF) is disordered.

It belongs to the bacterial ribosomal protein bL35 family.

The chain is Large ribosomal subunit protein bL35 from Staphylococcus epidermidis (strain ATCC 35984 / DSM 28319 / BCRC 17069 / CCUG 31568 / BM 3577 / RP62A).